A 440-amino-acid polypeptide reads, in one-letter code: Probable exopolygalacturonase C (440 aa).

Residues 1-21 (MLITNPALLGILASLVPLALG) form the signal peptide. Residues Asn84 and Asn151 are each glycosylated (N-linked (GlcNAc...) asparagine). PbH1 repeat units follow at residues 188 to 210 (GDDITVSHAIVDATSTGGFPFNT), 217 to 238 (GTNISITDSVMFNGDDAIAVNT), and 240 to 261 (SHNIVFARNTIGYQSHGMSIGS). Asn219 carries an N-linked (GlcNAc...) asparagine glycan. Asp231 acts as the Proton donor in catalysis. The active site involves His255. A glycan (N-linked (GlcNAc...) asparagine) is linked at Asn271. The stretch at 272–293 (ITNLRFEDVTVIDALYAARFKS) is one PbH1 4 repeat. Asn313 carries N-linked (GlcNAc...) asparagine glycosylation. Cysteines 389 and 395 form a disulfide. The N-linked (GlcNAc...) asparagine glycan is linked to Asn434.

This sequence belongs to the glycosyl hydrolase 28 family.

It is found in the secreted. The enzyme catalyses [(1-&gt;4)-alpha-D-galacturonosyl](n) + H2O = alpha-D-galacturonate + [(1-&gt;4)-alpha-D-galacturonosyl](n-1). In terms of biological role, specific in hydrolyzing the terminal glycosidic bond of polygalacturonic acid and oligogalacturonates. The polypeptide is Probable exopolygalacturonase C (pgxC) (Aspergillus fumigatus (strain CBS 144.89 / FGSC A1163 / CEA10) (Neosartorya fumigata)).